Consider the following 566-residue polypeptide: OTU domain-containing protein 5 (566 aa).

Disordered regions lie at residues methionine 1–leucine 117 and glycine 145–tyrosine 175. Positions proline 11–proline 30 are enriched in pro residues. Over residues alanine 34 to glycine 47 the composition is skewed to gly residues. The span at alanine 63–proline 75 shows a compositional bias: pro residues. The residue at position 64 (serine 64) is a Phosphoserine. Residues alanine 84–glutamine 97 are compositionally biased toward low complexity. The span at glycine 105–aspartate 115 shows a compositional bias: gly residues. At serine 165 the chain carries Phosphoserine. The residue at position 175 (tyrosine 175) is a Phosphotyrosine. The residue at position 177 (serine 177) is a Phosphoserine. Threonine 195 carries the post-translational modification Phosphothreonine. One can recognise an OTU domain in the interval phenylalanine 213–proline 336. Positions methionine 218–cysteine 224 are cys-loop. Aspartate 221 is an active-site residue. Cysteine 224 acts as the Nucleophile in catalysis. Residues lysine 273–isoleucine 283 are variable-loop. A Phosphoserine modification is found at serine 323. Residues tyrosine 324–histidine 329 are his-loop. Histidine 329 is an active-site residue. A phosphoserine mark is found at serine 332 and serine 370. Positions alanine 413–aspartate 499 are disordered. Composition is skewed to low complexity over residues alanine 425–serine 438 and serine 445–proline 457. Serine 447 is subject to Phosphoserine. A Phosphothreonine modification is found at threonine 502. Serine 503 is subject to Phosphoserine.

Belongs to the peptidase C85 family. In terms of assembly, interacts with TRAF3. Post-translationally, phosphorylation at Ser-177 is required for deubiquitinating activity. Phosphorylation at Ser-323, Ser-332 and Ser-503 by MTOR promotes its activity.

It localises to the nucleus. The enzyme catalyses Thiol-dependent hydrolysis of ester, thioester, amide, peptide and isopeptide bonds formed by the C-terminal Gly of ubiquitin (a 76-residue protein attached to proteins as an intracellular targeting signal).. With respect to regulation, inhibited by N-ethyl-maleimide (NEM). In terms of biological role, deubiquitinating enzyme that functions as a negative regulator of the innate immune system. Has peptidase activity towards 'Lys-48'- and 'Lys-63'-linked polyubiquitin chains. Can also cleave 'Lys-11'-linked ubiquitin chains (in vitro). Acts via TRAF3 deubiquitination and subsequent suppression of type I interferon (IFN) production. Controls neuroectodermal differentiation through cleaving 'Lys-48'-linked ubiquitin chains to counteract degradation of select chromatin regulators such as ARID1A, HDAC2 and HCF1. Acts as a positive regulator of mTORC1 and mTORC2 signaling following phosphorylation by MTOR: acts by mediating deubiquitination of BTRC, leading to its stability. This is OTU domain-containing protein 5 from Mus musculus (Mouse).